Reading from the N-terminus, the 97-residue chain is U6-theraphotoxin-Hhn1a 1 (97 aa).

Positions 1–33 (MLIKQFSRRSKNMKVQILLAFAALFVLAVGSYA) are cleaved as a signal peptide. Residues 34–61 (SESKKLDLRDALFSAMFSADYQLNPQER) constitute a propeptide that is removed on maturation. 3 cysteine pairs are disulfide-bonded: Cys-63-Cys-77, Cys-70-Cys-82, and Cys-76-Cys-89.

Belongs to the neurotoxin 10 (Hwtx-1) family. 12 (Hntx-12) subfamily. As to expression, expressed by the venom gland.

Its subcellular location is the secreted. Ion channel inhibitor. The sequence is that of U6-theraphotoxin-Hhn1a 1 from Cyriopagopus hainanus (Chinese bird spider).